The chain runs to 517 residues: AAA ATPase forming ring-shaped complexes (517 aa).

Positions 25-53 form a coiled coil; the sequence is ARNAKLVELLQASRTKLEEINGRLEALAE. Residue 233-238 participates in ATP binding; it reads GNGKTL.

This sequence belongs to the AAA ATPase family. Homohexamer. Assembles into a hexameric ring structure.

This Corynebacterium jeikeium (strain K411) protein is AAA ATPase forming ring-shaped complexes.